A 396-amino-acid polypeptide reads, in one-letter code: Ribosomal RNA large subunit methyltransferase I (396 aa).

Residues 2–81 (SVRLVLAKGR…ESIDIAFFSR (80 aa)) enclose the PUA domain.

This sequence belongs to the methyltransferase superfamily. RlmI family.

The protein localises to the cytoplasm. The enzyme catalyses cytidine(1962) in 23S rRNA + S-adenosyl-L-methionine = 5-methylcytidine(1962) in 23S rRNA + S-adenosyl-L-homocysteine + H(+). Specifically methylates the cytosine at position 1962 (m5C1962) of 23S rRNA. The polypeptide is Ribosomal RNA large subunit methyltransferase I (Shigella boydii serotype 4 (strain Sb227)).